Here is a 650-residue protein sequence, read N- to C-terminus: Probable ATP-dependent RNA helicase DDX17 (650 aa).

The tract at residues 1 to 38 (MRGGGFGDRDRDRDRGGFGARGGSGLPPKKFGNPGERL) is disordered. The span at 7 to 16 (GDRDRDRDRG) shows a compositional bias: basic and acidic residues. N6-acetyllysine is present on residues lysine 29, lysine 30, and lysine 42. Residue lysine 50 forms a Glycyl lysine isopeptide (Lys-Gly) (interchain with G-Cter in SUMO); alternate linkage. Residue lysine 50 forms a Glycyl lysine isopeptide (Lys-Gly) (interchain with G-Cter in SUMO1); alternate linkage. A Glycyl lysine isopeptide (Lys-Gly) (interchain with G-Cter in SUMO2); alternate cross-link involves residue lysine 50. The Q motif motif lies at 92-120 (FAFHHANFPQYVMDVLMDQHFTEPTPIQC). The 176-residue stretch at 123 to 298 (FPLALSGRDM…EDFLRDYTQI (176 aa)) folds into the Helicase ATP-binding domain. 136–143 (AQTGSGKT) lines the ATP pocket. Positions 246 to 249 (DEAD) match the DEAD box motif. Residues 326–473 (KLIQLMEEIM…AINPKLMQLV (148 aa)) form the Helicase C-terminal domain. Threonine 444 bears the Phosphothreonine mark. Lysine 449 participates in a covalent cross-link: Glycyl lysine isopeptide (Lys-Gly) (interchain with G-Cter in SUMO2). The interval 468 to 650 (KLMQLVDHRG…PPPPPPPSRK (183 aa)) is transactivation domain. Disordered stretches follow at residues 472 to 543 (LVDH…YGSP) and 583 to 650 (ASST…PSRK). Residues 489–499 (RTTSSANNPNL) show a composition bias toward polar residues. Residues 504–531 (ECDRRLRGVKDGGRRDSTSYRDRSETDR) are compositionally biased toward basic and acidic residues. Over residues 583–609 (ASSTASAGRSSQSSSQQFSGIGRSGQQ) the composition is skewed to low complexity. Arginine 605 is modified (omega-N-methylarginine). Positions 610-619 (PQPLMSQQFA) are enriched in polar residues. Pro residues predominate over residues 638-650 (YPPPPPPPPPSRK). Residues 639 to 647 (PPPPPPPPP) are interaction with YAP1.

The protein belongs to the DEAD box helicase family. DDX5/DBP2 subfamily. In terms of assembly, interacts with DDX5 in an RNA-independent manner. Interacts with CDK9 transcription elongation complex under basal conditions. Following cell stimulation with poly(I:C), a synthetic double-stranded RNA mimicking viral infection, the interaction with CDK9 is decreased. Interacts with ESR1 in an estrogen-independent manner. Interacts with HNRNPH1; this interaction is important for the regulation of alternative splicing on G-quadruplex structures. At high, but not low, cell density, interacts with DROSHA and DGCR8, the core components of the microprocessor complex involved in the maturation of primary microRNAs (pri-miRNAs) into pre-miRNAs. The interaction with DGCR8 is reduced during mitosis. At low, but not high, cell density, interacts with YAP1 and with its paralog, WWTR1/TAZ. Interactions with DROSHA and YAP1 are mutually exclusive. In vitro, the pre-miRNA processing activity of the DDX17-containing microprocessor complex is weaker than that of the DROSHA/DGCR8 microprocessor complex. Interacts with UPF3B. Interacts with NFAT5; this interaction leads to DDX17 recruitment to LNC2 and S100A4 promoters and NFAT5-mediated DDX17-enhanced transactivation. Interacts with HDAC1, HDAC2 and HDAC3; this interaction with HDAC1 and HDAC3, but not HDAC2, depends upon DDX17 acetylation. Interacts with ZC3HAV1 (via N-terminal domain) in an RNA-independent manner. Interacts with EXOSC3/RRP40 and EXOSC5/RRP46; this interaction may be indirect and mediated by ZC3HAV1-binding. Interacts with EP300; this interaction leads to acetylation at lysine residues. Interacts with CREBBP/CBP and KAT2B/P/CAF. Directly interacts with CTNNB1. Interacts with MYOD1. Interacts with TP53. Interacts with DCP1A in an RNA-independent manner. Interacts with DCP2 in an RNA-dependent manner. Interacts with DHX36; this interaction occurs in a RNA-dependent manner. Interacts with ERCC6. Sumoylation significantly increases stability. It also promotes interaction specifically with HDAC1 (but not HDAC2, nor HDAC3) and strongly stimulates ESR1 and TP53 coactivation. Post-translationally, acetylation at lysine residues stabilizes the protein, stimulates interaction with HDAC1 and HDAC3, but not HDAC2, and represses ESR1 and TP53 coactivation activity.

It is found in the nucleus. The protein resides in the nucleolus. It localises to the cytoplasm. The protein localises to the cytosol. The catalysed reaction is ATP + H2O = ADP + phosphate + H(+). In terms of biological role, as an RNA helicase, unwinds RNA and alters RNA structures through ATP binding and hydrolysis. Involved in multiple cellular processes, including pre-mRNA splicing, alternative splicing, ribosomal RNA processing and miRNA processing, as well as transcription regulation. Regulates the alternative splicing of exons exhibiting specific features. This function requires the RNA helicase activity. Affects NFAT5 and histone macro-H2A.1/MACROH2A1 alternative splicing in a CDK9-dependent manner. Affects splicing of mediators of steroid hormone signaling pathway, including kinases that phosphorylates ESR1 and transcriptional regulators. By acting splicing of regulatory factors, participates in ESR1 and AR stabilization. Promotes the inclusion of specific AC-rich alternative exons in CD44 transcripts. In myoblasts and epithelial cells, cooperates with HNRNPH1 to control the splicing of specific subsets of exons. In addition to binding mature mRNAs, also interacts with certain pri-microRNAs, including MIR132/miR-132, and stabilizes the primary transcript. Also participates in the MIR132 processing, resulting in significantly higher levels of mature MIR132 than MIR212 despite the fact that both are cotranscribed and co-regulated. Binding of pri-microRNAs may occur on the 3' segment flanking the stem loop via the 5'-[ACG]CAUC[ACU]-3' consensus sequence. Participates in MYC down-regulation at high cell density through the production of MYC-targeting microRNAs. Along with DDX5, may be involved in the processing of the 32S intermediate into the mature 28S rRNA. Promoter-specific transcription regulator, functioning as a coactivator or corepressor depending on the context of the promoter and the transcriptional complex in which it exists. Enhances NFAT5 transcriptional activity. Synergizes with TP53 in the activation of the MDM2 promoter; this activity requires acetylation on lysine residues. May also coactivate MDM2 transcription through a TP53-independent pathway. Coactivates MMP7 transcription. Along with CTNNB1, coactivates MYC, JUN, FOSL1 and cyclin D1/CCND1 transcription. Alone or in combination with DDX5 and/or SRA1 non-coding RNA, plays a critical role in promoting the assembly of proteins required for the formation of the transcription initiation complex and chromatin remodeling leading to coactivation of MYOD1-dependent transcription. This helicase-independent activity is required for skeletal muscle cells to properly differentiate into myotubes. During epithelial-to-mesenchymal transition, coregulates SMAD-dependent transcriptional activity, directly controlling key effectors of differentiation, including miRNAs which in turn directly repress its expression. Plays a role in estrogen and testosterone signaling pathway at several levels. Mediates the use of alternative promoters in estrogen-responsive genes and regulates transcription and splicing of a large number of steroid hormone target genes. Contrary to the splicing regulation activity, transcriptional coregulation of the estrogen receptor ESR1 is helicase activity-independent. Plays a role in innate immunity. Specifically restricts bunyavirus infection, including Rift Valley fever virus (RVFV) or La Crosse virus (LACV), but not vesicular stomatitis virus (VSV), in an interferon- and DROSHA-independent manner. Binds to RVFV RNA, likely via structured viral RNA elements. Promotes mRNA degradation mediated by the antiviral zinc-finger protein ZC3HAV1, in an ATPase-dependent manner. The polypeptide is Probable ATP-dependent RNA helicase DDX17 (Ddx17) (Mus musculus (Mouse)).